Reading from the N-terminus, the 74-residue chain is Kappa-stichotoxin-Hmg1a (74 aa).

The first 22 residues, 1 to 22 (MKSQMIAAVLLIAFCLCVVVTA), serve as a signal peptide directing secretion. A propeptide spanning residues 23–39 (RMELQDVEDMENGFQKR) is cleaved from the precursor. Residues 42–74 (CKDLIPVSECTDIRCRTSMKYRLNLCRKTCGSC) form the ShKT domain. 3 disulfide bridges follow: Cys-42–Cys-74, Cys-51–Cys-67, and Cys-56–Cys-71.

It belongs to the sea anemone type 1 potassium channel toxin family. Type 1a subfamily.

The protein localises to the secreted. The protein resides in the nematocyst. Potently blocks the voltage-gated potassium channel Kv1.1/KCNA1 (Ki=75 pM), KcsA (Ki~1 nM) and moderately blocks Kv1.2/KCNA2 (Ki=2.5 nM) and Kv1.3/KCNA3 (Ki=3.1 nM). Also facilitates acetylcholine release at the avian neuromuscular junction. Blockade and dissociation rate are sensitive to voltage. The sequence is that of Kappa-stichotoxin-Hmg1a from Heteractis magnifica (Magnificent sea anemone).